The primary structure comprises 145 residues: Putative antiporter subunit mnhG2 (145 aa).

The next 3 helical transmembrane spans lie at 11 to 31 (IAAV…IGIV), 51 to 71 (VLLT…FFSV), and 72 to 92 (RLLL…HLVA).

Belongs to the CPA3 antiporters (TC 2.A.63) subunit G family. As to quaternary structure, may form a heterooligomeric complex that consists of seven subunits: mnhA2, mnhB2, mnhC2, mnhD2, mnhE2, mnhF2 and mnhG2.

It is found in the cell membrane. This Staphylococcus aureus (strain bovine RF122 / ET3-1) protein is Putative antiporter subunit mnhG2 (mnhG2).